Consider the following 374-residue polypeptide: Cyclin-D (374 aa).

The protein belongs to the cyclin family. Cyclin D subfamily.

The chain is Cyclin-D (CycD) from Ostreococcus tauri.